The sequence spans 725 residues: Phosphoribosylformylglycinamidine synthase subunit PurL (725 aa).

The active site involves His34. Tyr37 lines the ATP pocket. Glu93 serves as a coordination point for Mg(2+). Substrate is bound by residues 94–97 and Arg116; that span reads SHNH. The Proton acceptor role is filled by His95. A Mg(2+)-binding site is contributed by Asp117. Residues 220–241 form a disordered region; the sequence is GASFASEDLSEDAETEDRPAVQ. A substrate-binding site is contributed by Gln241. Asp269 provides a ligand contact to Mg(2+). 313–315 is a substrate binding site; it reads ESQ. Residues Asp489 and Gly526 each contribute to the ATP site. Residue Asn527 participates in Mg(2+) binding. Ser529 is a substrate binding site.

It belongs to the FGAMS family. In terms of assembly, monomer. Part of the FGAM synthase complex composed of 1 PurL, 1 PurQ and 2 PurS subunits.

It localises to the cytoplasm. The enzyme catalyses N(2)-formyl-N(1)-(5-phospho-beta-D-ribosyl)glycinamide + L-glutamine + ATP + H2O = 2-formamido-N(1)-(5-O-phospho-beta-D-ribosyl)acetamidine + L-glutamate + ADP + phosphate + H(+). Its pathway is purine metabolism; IMP biosynthesis via de novo pathway; 5-amino-1-(5-phospho-D-ribosyl)imidazole from N(2)-formyl-N(1)-(5-phospho-D-ribosyl)glycinamide: step 1/2. Functionally, part of the phosphoribosylformylglycinamidine synthase complex involved in the purines biosynthetic pathway. Catalyzes the ATP-dependent conversion of formylglycinamide ribonucleotide (FGAR) and glutamine to yield formylglycinamidine ribonucleotide (FGAM) and glutamate. The FGAM synthase complex is composed of three subunits. PurQ produces an ammonia molecule by converting glutamine to glutamate. PurL transfers the ammonia molecule to FGAR to form FGAM in an ATP-dependent manner. PurS interacts with PurQ and PurL and is thought to assist in the transfer of the ammonia molecule from PurQ to PurL. In Haloquadratum walsbyi (strain DSM 16790 / HBSQ001), this protein is Phosphoribosylformylglycinamidine synthase subunit PurL.